A 377-amino-acid chain; its full sequence is Glutamate 5-kinase (377 aa).

Lys-20 is a binding site for ATP. Residues Ser-60, Asp-147, and Asn-159 each coordinate substrate. An ATP-binding site is contributed by 179 to 180; it reads SD. Residues 281–355 enclose the PUA domain; the sequence is HGQLHLDAGA…GQSTSDLPEF (75 aa).

This sequence belongs to the glutamate 5-kinase family.

It is found in the cytoplasm. It carries out the reaction L-glutamate + ATP = L-glutamyl 5-phosphate + ADP. It participates in amino-acid biosynthesis; L-proline biosynthesis; L-glutamate 5-semialdehyde from L-glutamate: step 1/2. Functionally, catalyzes the transfer of a phosphate group to glutamate to form L-glutamate 5-phosphate. The polypeptide is Glutamate 5-kinase (Corynebacterium jeikeium (strain K411)).